Here is a 428-residue protein sequence, read N- to C-terminus: Elongation factor 1-alpha (428 aa).

The tr-type G domain occupies 5-225 (KPVLNVAFIG…DKFQPPEKPT (221 aa)). The segment at 14-21 (GHVDAGKS) is G1. A GTP-binding site is contributed by 14–21 (GHVDAGKS). Ser-21 is a binding site for Mg(2+). A G2 region spans residues 70 to 74 (GVTID). The G3 stretch occupies residues 91 to 94 (DCPG). GTP contacts are provided by residues 91–95 (DCPGH) and 149–152 (NKMD). Positions 149 to 152 (NKMD) are G4. Positions 189–191 (ASL) are G5.

Belongs to the TRAFAC class translation factor GTPase superfamily. Classic translation factor GTPase family. EF-Tu/EF-1A subfamily.

It is found in the cytoplasm. It catalyses the reaction GTP + H2O = GDP + phosphate + H(+). Functionally, GTP hydrolase that promotes the GTP-dependent binding of aminoacyl-tRNA to the A-site of ribosomes during protein biosynthesis. The sequence is that of Elongation factor 1-alpha from Methanocaldococcus jannaschii (strain ATCC 43067 / DSM 2661 / JAL-1 / JCM 10045 / NBRC 100440) (Methanococcus jannaschii).